The chain runs to 738 residues: Protostadienol synthase A (738 aa).

A PFTB 1 repeat occupies 132-173 (KQEMCRYLLNVVNEDGGWGLFIQSPSTVFGTVMNYCMLRILG). Residue aspartate 463 is the Proton donor of the active site. PFTB repeat units follow at residues 490–531 (LQQA…YENV), 567–607 (VSRS…ACMG), and 616–663 (CQRA…AVIG).

This sequence belongs to the terpene cyclase/mutase family.

It carries out the reaction (S)-2,3-epoxysqualene = (17Z)-protosta-17(20),24-dien-3beta-ol. In terms of biological role, protostadienol synthase which cyclizes (3S)-oxidosqualene to (17Z)-protosta-17(20),24-dien-3-beta-ol (protostadienol), the biosynthetic precursor of helvolic acid, a secondary metabolite which promotes virulence. This is Protostadienol synthase A (pdsA) from Neosartorya fischeri (strain ATCC 1020 / DSM 3700 / CBS 544.65 / FGSC A1164 / JCM 1740 / NRRL 181 / WB 181) (Aspergillus fischerianus).